A 284-amino-acid polypeptide reads, in one-letter code: Tropomyosin alpha-1 chain (284 aa).

Met-1 bears the N-acetylmethionine mark. Residues Met-1–Gln-38 form a disordered region. Positions Met-1–Ile-284 form a coiled coil. The span at Lys-12–Gln-38 shows a compositional bias: basic and acidic residues. A Phosphoserine modification is found at Ser-45. Residues Ala-116–Lys-136 are disordered. A phosphoserine mark is found at Ser-174, Ser-186, Ser-206, and Ser-252. Tyr-261 is subject to Phosphotyrosine. Phosphoserine is present on residues Ser-271 and Ser-283.

Belongs to the tropomyosin family. As to quaternary structure, homodimer. Heterodimer of an alpha (TPM1, TPM3 or TPM4) and a beta (TPM2) chain. Interacts with HRG (via the HRR domain); the interaction contributes to the antiangiogenic properties of the histidine/proline-rich region (HRR) of HRG. Interacts (via N-terminus) with LMOD2 (via N-terminus) and TMOD1 (via N-terminus). In terms of processing, phosphorylated at Ser-283 by DAPK1 in response to oxidative stress and this phosphorylation enhances stress fiber formation in endothelial cells.

Its subcellular location is the cytoplasm. The protein resides in the cytoskeleton. Its function is as follows. Binds to actin filaments in muscle and non-muscle cells. Plays a central role, in association with the troponin complex, in the calcium dependent regulation of vertebrate striated muscle contraction. Smooth muscle contraction is regulated by interaction with caldesmon. In non-muscle cells is implicated in stabilizing cytoskeleton actin filaments. The sequence is that of Tropomyosin alpha-1 chain (Tpm1) from Mus musculus (Mouse).